Here is a 451-residue protein sequence, read N- to C-terminus: Trigger factor (451 aa).

Residues 162–243 (GDYAIIDITT…VQQSKERKLP (82 aa)) form the PPIase FKBP-type domain.

This sequence belongs to the FKBP-type PPIase family. Tig subfamily.

Its subcellular location is the cytoplasm. The catalysed reaction is [protein]-peptidylproline (omega=180) = [protein]-peptidylproline (omega=0). Involved in protein export. Acts as a chaperone by maintaining the newly synthesized protein in an open conformation. Functions as a peptidyl-prolyl cis-trans isomerase. The chain is Trigger factor from Corynebacterium aurimucosum (strain ATCC 700975 / DSM 44827 / CIP 107346 / CN-1) (Corynebacterium nigricans).